Consider the following 152-residue polypeptide: Lipoprotein signal peptidase (152 aa).

The next 2 membrane-spanning stretches (helical) occupy residues 55–75 (NKMW…VFYM) and 85–105 (LGIS…DRVF). Catalysis depends on residues Asp-111 and Asp-129. Residues 124-144 (VFNIADSALCIGVVLIIIQTL) form a helical membrane-spanning segment.

It belongs to the peptidase A8 family.

It localises to the cell membrane. It carries out the reaction Release of signal peptides from bacterial membrane prolipoproteins. Hydrolyzes -Xaa-Yaa-Zaa-|-(S,diacylglyceryl)Cys-, in which Xaa is hydrophobic (preferably Leu), and Yaa (Ala or Ser) and Zaa (Gly or Ala) have small, neutral side chains.. It functions in the pathway protein modification; lipoprotein biosynthesis (signal peptide cleavage). In terms of biological role, this protein specifically catalyzes the removal of signal peptides from prolipoproteins. The sequence is that of Lipoprotein signal peptidase from Bacillus cytotoxicus (strain DSM 22905 / CIP 110041 / 391-98 / NVH 391-98).